Here is a 331-residue protein sequence, read N- to C-terminus: Ribose-phosphate pyrophosphokinase (331 aa).

55–57 (DGE) contacts ATP. Positions 148 and 187 each coordinate Mg(2+). Lys-211 is an active-site residue. Residues Arg-213, Asp-237, and 241 to 245 (DTAGT) each bind D-ribose 5-phosphate.

It belongs to the ribose-phosphate pyrophosphokinase family. Class I subfamily. Homohexamer. Requires Mg(2+) as cofactor.

Its subcellular location is the cytoplasm. The catalysed reaction is D-ribose 5-phosphate + ATP = 5-phospho-alpha-D-ribose 1-diphosphate + AMP + H(+). It participates in metabolic intermediate biosynthesis; 5-phospho-alpha-D-ribose 1-diphosphate biosynthesis; 5-phospho-alpha-D-ribose 1-diphosphate from D-ribose 5-phosphate (route I): step 1/1. Functionally, involved in the biosynthesis of the central metabolite phospho-alpha-D-ribosyl-1-pyrophosphate (PRPP) via the transfer of pyrophosphoryl group from ATP to 1-hydroxyl of ribose-5-phosphate (Rib-5-P). In Synechococcus elongatus (strain ATCC 33912 / PCC 7942 / FACHB-805) (Anacystis nidulans R2), this protein is Ribose-phosphate pyrophosphokinase.